The following is a 532-amino-acid chain: Purple acid phosphatase 15 (532 aa).

Residues 1 to 19 (MTFLLLLLFCFLSPAISSA) form the signal peptide. N136 is a glycosylation site (N-linked (GlcNAc...) asparagine). Residue D194 coordinates Fe cation. A glycan (N-linked (GlcNAc...) asparagine) is linked at N200. The Fe cation site is built by D221 and Y224. Residue D221 participates in Zn(2+) binding. Residues N231 and N264 are each glycosylated (N-linked (GlcNAc...) asparagine). N277 serves as a coordination point for Zn(2+). N277 serves as a coordination point for substrate. 2 N-linked (GlcNAc...) asparagine glycosylation sites follow: N286 and N301. H359 provides a ligand contact to Zn(2+). H369 acts as the Proton donor in catalysis. H396 is a binding site for Zn(2+). 396 to 398 (HVH) contributes to the substrate binding site. H398 serves as a coordination point for Fe cation. N-linked (GlcNAc...) asparagine glycosylation occurs at N491.

The protein belongs to the metallophosphoesterase superfamily. Purple acid phosphatase family. As to quaternary structure, homodimer. Fe cation serves as cofactor. Zn(2+) is required as a cofactor. In terms of tissue distribution, expressed in roots, stems, cotyledons, leaves, flowers and siliques.

It is found in the secreted. The catalysed reaction is 1D-myo-inositol hexakisphosphate + H2O = 1D-myo-inositol 1,2,3,5,6-pentakisphosphate + phosphate. It catalyses the reaction a phosphate monoester + H2O = an alcohol + phosphate. In terms of biological role, acid phosphatase activity with p-nitrophenyl phosphate (pNPP), D-myoinositol 1-phosphate (Ins(1)P1), phytic acid and Myo-inositol hexakisphosphate. Low or no activity with Glc-6-P and ATP. Confers shoot growth stimulation, enhanced salt and osmotic stress tolerance, and ABA insensitivity. May modulate ascorbic acid (AsA) levels by controlling the input of myoinositol into this branch of AsA biosynthesis. The sequence is that of Purple acid phosphatase 15 (PAP15) from Arabidopsis thaliana (Mouse-ear cress).